A 142-amino-acid chain; its full sequence is Large ribosomal subunit protein uL13 (142 aa).

It belongs to the universal ribosomal protein uL13 family. Part of the 50S ribosomal subunit.

Functionally, this protein is one of the early assembly proteins of the 50S ribosomal subunit, although it is not seen to bind rRNA by itself. It is important during the early stages of 50S assembly. In Psychrobacter arcticus (strain DSM 17307 / VKM B-2377 / 273-4), this protein is Large ribosomal subunit protein uL13.